The primary structure comprises 355 residues: MLIGEIMDLNLKNFLEDREEIIRDAKRKDEKSFKDFKKIVEEIKERENKDKIVCDFTEYNPLHKGHKYALEKGKEHGIFISVLPGPLERSGRGIPYFLNRYIRAEMAIRAGADIVVEGPPMGIMGSGQYMRCLIKMFYSLGAEIIPRGYIPEKTMEKVIDCINKGYHIQVKPYKIICIETGEILGEKLNIDNYVIASMSQMIYKLNREGLKFNPKFVFVKRLEGISGTKIREAIFSGKFEDIKNMLPKTTLSILKELYDNGKLNELILKRFEDRILETANEYDLYEYLPSNVAEILEKKRPFNNIEEIKNSLPYGFSRHFRERILSKLEARIPNETLSKYINNYPAKIKILAVKL.

Belongs to the TmcAL family.

This is an uncharacterized protein from Methanocaldococcus jannaschii (strain ATCC 43067 / DSM 2661 / JAL-1 / JCM 10045 / NBRC 100440) (Methanococcus jannaschii).